Consider the following 154-residue polypeptide: Protein X (154 aa).

The segment at 68–117 (PCALRFTSARCMETTVNAPRNLPKVLHKRTLGLSAMSTTKIETYFKDCVF) is mitochondrial targeting sequence.

The protein belongs to the orthohepadnavirus protein X family. May form homodimer. May interact with host CEBPA, CFLAR, CREB1, DDB1, E4F1, HBXIP, HSPD1/HSP60, NFKBIA, POLR2E and SMAD4. Interacts with host SMC5-SMC6 complex and induces its degradation. Interacts with host TRPC4AP; leading to prevent ubiquitination of TRPC4AP. Interacts with host PLSCR1; this interaction promotes ubiquitination and degradation of HBx and impairs HBx-mediated cell proliferation. A fraction may be phosphorylated in insect cells and HepG2 cells, a human hepatoblastoma cell line. Phosphorylated in vitro by host protein kinase C or mitogen-activated protein kinase. N-acetylated in insect cells.

It is found in the host cytoplasm. The protein resides in the host nucleus. It localises to the host mitochondrion. Its function is as follows. Multifunctional protein that plays a role in silencing host antiviral defenses and promoting viral transcription. Does not seem to be essential for HBV infection. May be directly involved in development of cirrhosis and liver cancer (hepatocellular carcinoma). Most of cytosolic activities involve modulation of cytosolic calcium. The effect on apoptosis is controversial depending on the cell types in which the studies have been conducted. May induce apoptosis by localizing in mitochondria and causing loss of mitochondrial membrane potential. May also modulate apoptosis by binding host CFLAR, a key regulator of the death-inducing signaling complex (DISC). Promotes viral transcription by using the host E3 ubiquitin ligase DDB1 to target the SMC5-SMC6 complex to proteasomal degradation. This host complex would otherwise bind to viral episomal DNA, and prevents its transcription. Moderately stimulates transcription of many different viral and cellular transcription elements. Promoters and enhancers stimulated by HBx contain DNA binding sites for NF-kappa-B, AP-1, AP-2, c-EBP, ATF/CREB, or the calcium-activated factor NF-AT. This Chimpanzee hepatitis B virus (isolate United Kingdom/LSH/1988) (HBVcpz) protein is Protein X.